The following is a 474-amino-acid chain: 3-isopropylmalate dehydratase large subunit (474 aa).

Cys-355, Cys-415, and Cys-418 together coordinate [4Fe-4S] cluster.

It belongs to the aconitase/IPM isomerase family. LeuC type 1 subfamily. In terms of assembly, heterodimer of LeuC and LeuD. The cofactor is [4Fe-4S] cluster.

It carries out the reaction (2R,3S)-3-isopropylmalate = (2S)-2-isopropylmalate. It functions in the pathway amino-acid biosynthesis; L-leucine biosynthesis; L-leucine from 3-methyl-2-oxobutanoate: step 2/4. Functionally, catalyzes the isomerization between 2-isopropylmalate and 3-isopropylmalate, via the formation of 2-isopropylmaleate. The chain is 3-isopropylmalate dehydratase large subunit from Shewanella putrefaciens (strain CN-32 / ATCC BAA-453).